A 211-amino-acid polypeptide reads, in one-letter code: Thiamine-phosphate synthase (211 aa).

4-amino-2-methyl-5-(diphosphooxymethyl)pyrimidine contacts are provided by residues 37–41 and asparagine 69; that span reads QLRIK. Positions 70 and 89 each coordinate Mg(2+). Serine 108 contributes to the 4-amino-2-methyl-5-(diphosphooxymethyl)pyrimidine binding site. 134-136 serves as a coordination point for 2-[(2R,5Z)-2-carboxy-4-methylthiazol-5(2H)-ylidene]ethyl phosphate; the sequence is TQT. Residue lysine 137 coordinates 4-amino-2-methyl-5-(diphosphooxymethyl)pyrimidine. Residues glycine 166 and 186–187 contribute to the 2-[(2R,5Z)-2-carboxy-4-methylthiazol-5(2H)-ylidene]ethyl phosphate site; that span reads VS.

This sequence belongs to the thiamine-phosphate synthase family. The cofactor is Mg(2+).

It catalyses the reaction 2-[(2R,5Z)-2-carboxy-4-methylthiazol-5(2H)-ylidene]ethyl phosphate + 4-amino-2-methyl-5-(diphosphooxymethyl)pyrimidine + 2 H(+) = thiamine phosphate + CO2 + diphosphate. The enzyme catalyses 2-(2-carboxy-4-methylthiazol-5-yl)ethyl phosphate + 4-amino-2-methyl-5-(diphosphooxymethyl)pyrimidine + 2 H(+) = thiamine phosphate + CO2 + diphosphate. The catalysed reaction is 4-methyl-5-(2-phosphooxyethyl)-thiazole + 4-amino-2-methyl-5-(diphosphooxymethyl)pyrimidine + H(+) = thiamine phosphate + diphosphate. It participates in cofactor biosynthesis; thiamine diphosphate biosynthesis; thiamine phosphate from 4-amino-2-methyl-5-diphosphomethylpyrimidine and 4-methyl-5-(2-phosphoethyl)-thiazole: step 1/1. Functionally, condenses 4-methyl-5-(beta-hydroxyethyl)thiazole monophosphate (THZ-P) and 2-methyl-4-amino-5-hydroxymethyl pyrimidine pyrophosphate (HMP-PP) to form thiamine monophosphate (TMP). This is Thiamine-phosphate synthase from Citrobacter koseri (strain ATCC BAA-895 / CDC 4225-83 / SGSC4696).